We begin with the raw amino-acid sequence, 257 residues long: Acetylglutamate kinase (257 aa).

Substrate contacts are provided by residues 43–44 (GG), Arg-65, and Asn-157. Residues 180–185 (DVSGIL) and 208–210 (IIT) contribute to the ATP site.

This sequence belongs to the acetylglutamate kinase family. ArgB subfamily. As to quaternary structure, homodimer.

The protein resides in the cytoplasm. It carries out the reaction N-acetyl-L-glutamate + ATP = N-acetyl-L-glutamyl 5-phosphate + ADP. The protein operates within amino-acid biosynthesis; L-arginine biosynthesis; N(2)-acetyl-L-ornithine from L-glutamate: step 2/4. In terms of biological role, catalyzes the ATP-dependent phosphorylation of N-acetyl-L-glutamate. This chain is Acetylglutamate kinase, found in Proteus mirabilis (strain HI4320).